The primary structure comprises 568 residues: Autophagy-related protein 17 (568 aa).

Disordered regions lie at residues 1-59 and 522-568; these read MASF…DSSE and SYEM…ERPF. Over residues 522-546 the composition is skewed to basic and acidic residues; that stretch reads SYEMEAHGEPENEGKVETAYERETE.

It belongs to the ATG17 family.

The protein localises to the cytoplasm. It is found in the preautophagosomal structure membrane. Functionally, autophagy-specific protein that functions in response to autophagy-inducing signals as a scaffold to recruit other ATG proteins to organize pre-autophagosomal structure (PAS) formation. Modulates the timing and magnitude of the autophagy response, such as the size of the sequestering vesicles. Plays particularly a role in pexophagy and nucleophagy. The chain is Autophagy-related protein 17 (apg-9) from Neurospora crassa (strain ATCC 24698 / 74-OR23-1A / CBS 708.71 / DSM 1257 / FGSC 987).